Consider the following 249-residue polypeptide: MSGHSKWATIKRKKDAIDSKRGAIFTRVGKEITVAAKMGGGDPEGNPRLRLAILKAKSVNMPKDNIERAIRKGTGELEGVTYEECLYECFGPGGIAIMVSAVTDKKSRTTPEIKSILTKLGGSLATSGSVSRLFEKKGVIVLESSQISEDELVDVAVGGGAEDVINEGDVYRVISVPDNYETVLHALNEKGLKSEESEIRYIPLVSSEIADKEVAEKIMKLIDQLDGHDDVTSVTSNFELASSLEKEFE.

It belongs to the TACO1 family.

The protein localises to the cytoplasm. This is Probable transcriptional regulatory protein LIC_12886 from Leptospira interrogans serogroup Icterohaemorrhagiae serovar copenhageni (strain Fiocruz L1-130).